A 474-amino-acid chain; its full sequence is 3-isopropylmalate dehydratase large subunit (474 aa).

[4Fe-4S] cluster contacts are provided by cysteine 353, cysteine 414, and cysteine 417.

This sequence belongs to the aconitase/IPM isomerase family. LeuC type 1 subfamily. Heterodimer of LeuC and LeuD. The cofactor is [4Fe-4S] cluster.

It catalyses the reaction (2R,3S)-3-isopropylmalate = (2S)-2-isopropylmalate. Its pathway is amino-acid biosynthesis; L-leucine biosynthesis; L-leucine from 3-methyl-2-oxobutanoate: step 2/4. In terms of biological role, catalyzes the isomerization between 2-isopropylmalate and 3-isopropylmalate, via the formation of 2-isopropylmaleate. The sequence is that of 3-isopropylmalate dehydratase large subunit from Teredinibacter turnerae (strain ATCC 39867 / T7901).